Reading from the N-terminus, the 140-residue chain is Nucleoside diphosphate kinase (140 aa).

Residues K11, F59, R87, T93, R104, and N114 each coordinate ATP. The active-site Pros-phosphohistidine intermediate is H117.

Belongs to the NDK family. In terms of assembly, homotetramer. Mg(2+) serves as cofactor.

It localises to the cytoplasm. It catalyses the reaction a 2'-deoxyribonucleoside 5'-diphosphate + ATP = a 2'-deoxyribonucleoside 5'-triphosphate + ADP. The enzyme catalyses a ribonucleoside 5'-diphosphate + ATP = a ribonucleoside 5'-triphosphate + ADP. Its function is as follows. Major role in the synthesis of nucleoside triphosphates other than ATP. The ATP gamma phosphate is transferred to the NDP beta phosphate via a ping-pong mechanism, using a phosphorylated active-site intermediate. In Rickettsia bellii (strain OSU 85-389), this protein is Nucleoside diphosphate kinase.